The following is a 217-amino-acid chain: Uridylate kinase (217 aa).

6 to 10 contacts ATP; it reads KLSGR. Gly38 is a UMP binding site. ATP contacts are provided by Gly39 and Arg43. Residues Asp60 and 107-113 contribute to the UMP site; that span reads FQPGQST. The ATP site is built by Asn134, Tyr139, and Asp142.

This sequence belongs to the UMP kinase family. Homohexamer.

Its subcellular location is the cytoplasm. The enzyme catalyses UMP + ATP = UDP + ADP. It functions in the pathway pyrimidine metabolism; CTP biosynthesis via de novo pathway; UDP from UMP (UMPK route): step 1/1. Inhibited by UTP. Functionally, catalyzes the reversible phosphorylation of UMP to UDP. The sequence is that of Uridylate kinase from Pyrobaculum islandicum (strain DSM 4184 / JCM 9189 / GEO3).